The sequence spans 183 residues: Ribosome rescue factor SmrB (183 aa).

Positions 98 to 173 (LDLHGLTQQQ…GDAALLVLIE (76 aa)) constitute a Smr domain.

Belongs to the SmrB family. In terms of assembly, associates with collided ribosomes, but not with correctly translating polysomes.

In terms of biological role, acts as a ribosome collision sensor. Detects stalled/collided disomes (pairs of ribosomes where the leading ribosome is stalled and a second ribosome has collided with it) and endonucleolytically cleaves mRNA at the 5' boundary of the stalled ribosome. Stalled/collided disomes form a new interface (primarily via the 30S subunits) that binds SmrB. Cleaved mRNA becomes available for tmRNA ligation, leading to ribosomal subunit dissociation and rescue of stalled ribosomes. This is Ribosome rescue factor SmrB from Klebsiella pneumoniae (strain 342).